A 168-amino-acid chain; its full sequence is Large ribosomal subunit protein uL10 (168 aa).

It belongs to the universal ribosomal protein uL10 family. Part of the ribosomal stalk of the 50S ribosomal subunit. The N-terminus interacts with L11 and the large rRNA to form the base of the stalk. The C-terminus forms an elongated spine to which L12 dimers bind in a sequential fashion forming a multimeric L10(L12)X complex.

Functionally, forms part of the ribosomal stalk, playing a central role in the interaction of the ribosome with GTP-bound translation factors. This is Large ribosomal subunit protein uL10 from Paracidovorax citrulli (strain AAC00-1) (Acidovorax citrulli).